A 185-amino-acid chain; its full sequence is Elongation factor P (185 aa).

The protein belongs to the elongation factor P family.

The protein resides in the cytoplasm. It participates in protein biosynthesis; polypeptide chain elongation. Functionally, involved in peptide bond synthesis. Stimulates efficient translation and peptide-bond synthesis on native or reconstituted 70S ribosomes in vitro. Probably functions indirectly by altering the affinity of the ribosome for aminoacyl-tRNA, thus increasing their reactivity as acceptors for peptidyl transferase. The protein is Elongation factor P of Bacillus licheniformis (strain ATCC 14580 / DSM 13 / JCM 2505 / CCUG 7422 / NBRC 12200 / NCIMB 9375 / NCTC 10341 / NRRL NRS-1264 / Gibson 46).